The sequence spans 693 residues: tRNA (guanine(37)-N(1))-methyltransferase (693 aa).

Residues R327, 365-366 (DI), and 392-393 (DA) contribute to the S-adenosyl-L-methionine site. The disordered stretch occupies residues 497–572 (AGDSHQSNSH…QKAEDAPTNE (76 aa)). The span at 500-512 (SHQSNSHQSNPHE) shows a compositional bias: low complexity. N591 provides a ligand contact to S-adenosyl-L-methionine.

Belongs to the class I-like SAM-binding methyltransferase superfamily. TRM5/TYW2 family. As to quaternary structure, monomer.

It localises to the mitochondrion matrix. Its subcellular location is the nucleus. The protein localises to the cytoplasm. It catalyses the reaction guanosine(37) in tRNA + S-adenosyl-L-methionine = N(1)-methylguanosine(37) in tRNA + S-adenosyl-L-homocysteine + H(+). In terms of biological role, specifically methylates the N1 position of guanosine-37 in various cytoplasmic and mitochondrial tRNAs. Methylation is not dependent on the nature of the nucleoside 5' of the target nucleoside. This is the first step in the biosynthesis of wybutosine (yW), a modified base adjacent to the anticodon of tRNAs and required for accurate decoding. The polypeptide is tRNA (guanine(37)-N(1))-methyltransferase (Plasmodium vivax (strain Salvador I)).